We begin with the raw amino-acid sequence, 1141 residues long: Isoleucine--tRNA ligase (1141 aa).

A 'HIGH' region motif is present at residues 50-60 (PSANGMPGIHH). The short motif at 689–693 (KMSKR) is the 'KMSKS' region element. Lys-692 contributes to the ATP binding site.

This sequence belongs to the class-I aminoacyl-tRNA synthetase family. IleS type 2 subfamily. In terms of assembly, monomer. It depends on Zn(2+) as a cofactor.

Its subcellular location is the cytoplasm. It carries out the reaction tRNA(Ile) + L-isoleucine + ATP = L-isoleucyl-tRNA(Ile) + AMP + diphosphate. Functionally, catalyzes the attachment of isoleucine to tRNA(Ile). As IleRS can inadvertently accommodate and process structurally similar amino acids such as valine, to avoid such errors it has two additional distinct tRNA(Ile)-dependent editing activities. One activity is designated as 'pretransfer' editing and involves the hydrolysis of activated Val-AMP. The other activity is designated 'posttransfer' editing and involves deacylation of mischarged Val-tRNA(Ile). The chain is Isoleucine--tRNA ligase from Bacteroides fragilis (strain ATCC 25285 / DSM 2151 / CCUG 4856 / JCM 11019 / LMG 10263 / NCTC 9343 / Onslow / VPI 2553 / EN-2).